Here is a 284-residue protein sequence, read N- to C-terminus: Tropomyosin alpha-1 chain (284 aa).

M1 carries the post-translational modification N-acetylmethionine. The interval 1 to 38 (MDAIKKKMQMLKLDKENALDRAEQAEADKKAAEDRSKQ) is disordered. Positions 1-284 (MDAIKKKMQM…DHALNDMTSI (284 aa)) form a coiled coil. The segment covering 12–38 (KLDKENALDRAEQAEADKKAAEDRSKQ) has biased composition (basic and acidic residues). At S45 the chain carries Phosphoserine. A disordered region spans residues 116-136 (AEKAADESERGMKVIESRAQK). Phosphoserine occurs at positions 174, 186, 206, and 252. A Phosphotyrosine modification is found at Y261. Residues S271 and S283 each carry the phosphoserine modification.

This sequence belongs to the tropomyosin family. In terms of assembly, homodimer. Heterodimer of an alpha (TPM1, TPM3 or TPM4) and a beta (TPM2) chain. Interacts with HRG (via the HRR domain); the interaction contributes to the antiangiogenic properties of the histidine/proline-rich region (HRR) of HRG. Interacts (via N-terminus) with LMOD2 (via N-terminus) and TMOD1 (via N-terminus). Phosphorylated at Ser-283 by DAPK1 in response to oxidative stress and this phosphorylation enhances stress fiber formation in endothelial cells.

Its subcellular location is the cytoplasm. It is found in the cytoskeleton. Functionally, binds to actin filaments in muscle and non-muscle cells. Plays a central role, in association with the troponin complex, in the calcium dependent regulation of vertebrate striated muscle contraction. Smooth muscle contraction is regulated by interaction with caldesmon. In non-muscle cells is implicated in stabilizing cytoskeleton actin filaments. In Mus musculus (Mouse), this protein is Tropomyosin alpha-1 chain (Tpm1).